Reading from the N-terminus, the 167-residue chain is Protein YfbM (167 aa).

Monomer.

This Escherichia coli (strain K12) protein is Protein YfbM (yfbM).